Here is a 138-residue protein sequence, read N- to C-terminus: Basic leucine zipper 8 (138 aa).

The interval 30 to 67 (NLPATSDDSSRTAEDNERKRRRKVSNRESARRSRMRKQ) is disordered. Positions 37–47 (DSSRTAEDNER) are enriched in basic and acidic residues. Positions 45–108 (NERKRRRKVS…EKVIEENMKL (64 aa)) constitute a bZIP domain. Residues 47–68 (RKRRRKVSNRESARRSRMRKQR) form a basic motif region. Residues 48 to 55 (KRRRKVSN) carry the Nuclear localization signal motif. Residues 73–87 (LWSMLVQLINKNKSL) form a leucine-zipper region.

The protein belongs to the bZIP family. As to quaternary structure, homodimer.

The protein localises to the nucleus. The sequence is that of Basic leucine zipper 8 from Arabidopsis thaliana (Mouse-ear cress).